The primary structure comprises 749 residues: Disintegrin and metalloproteinase domain-containing protein 10 (749 aa).

A signal peptide spans 1–18 (MVLPTVLILLLSWAAGLG). Positions 19–214 (GQYGNPLNKY…MGPELLRKKR (196 aa)) are excised as a propeptide. The Cysteine switch signature appears at 171-178 (GGCADHSV). Cysteine 173 serves as a coordination point for Zn(2+). Over 215–673 (TTLAERNTCQ…SPQLYENIAE (459 aa)) the chain is Extracellular. Positions 221-457 (NTCQLYIQTD…KRNNCFVESG (237 aa)) constitute a Peptidase M12B domain. 17 disulfide bridges follow: cysteine 223–cysteine 314, cysteine 345–cysteine 452, cysteine 400–cysteine 436, cysteine 461–cysteine 496, cysteine 472–cysteine 485, cysteine 474–cysteine 480, cysteine 484–cysteine 516, cysteine 504–cysteine 512, cysteine 511–cysteine 537, cysteine 525–cysteine 544, cysteine 531–cysteine 563, cysteine 556–cysteine 568, cysteine 573–cysteine 599, cysteine 581–cysteine 608, cysteine 583–cysteine 598, cysteine 595–cysteine 640, and cysteine 633–cysteine 646. N-linked (GlcNAc...) asparagine glycans are attached at residues asparagine 268 and asparagine 279. Histidine 384 is a binding site for Zn(2+). Glutamate 385 is a catalytic residue. Positions 388 and 394 each coordinate Zn(2+). N-linked (GlcNAc...) asparagine glycosylation occurs at asparagine 440. The 95-residue stretch at 458 to 552 (QPICGNGMVE…LCPASDPKPN (95 aa)) folds into the Disintegrin domain. N-linked (GlcNAc...) asparagine glycosylation is present at asparagine 552. A helical transmembrane segment spans residues 674–697 (WIVAHWWAVLLMGIALIMLMAGFI). Topologically, residues 698-749 (KICSVHTPSSNPKLPPPKPLPGTLKRRRPPQPIQQPPRQRPRESYQMGHMRR) are cytoplasmic. The tract at residues 705 to 749 (PSSNPKLPPPKPLPGTLKRRRPPQPIQQPPRQRPRESYQMGHMRR) is disordered. An SH3-binding motif is present at residues 709 to 716 (PKLPPPKP). Threonine 720 carries the phosphothreonine modification. An SH3-binding motif is present at residues 723-729 (RRRPPQP). The interaction with AP2A1, AP2A2 and AP2M1 stretch occupies residues 735–749 (RQRPRESYQMGHMRR).

In terms of assembly, forms a ternary EFNA5-EPHA3-ADAM10 complex mediating EFNA5 extracellular domain shedding by ADAM10 which regulates the EFNA5-EPHA3 complex internalization and function, the cleavage occurs in trans, with ADAM10 and its substrate being on the membranes of opposing cells. Interacts with the clathrin adapter AP2 complex subunits AP2A1, AP2A2, AP2B1, and AP2M1; this interaction facilitates ADAM10 endocytosis from the plasma membrane during long-term potentiation in hippocampal neurons. Forms a ternary complex composed of ADAM10, EPHA4 and CADH1; within the complex, ADAM10 cleaves CADH1 which disrupts adherens junctions. Interacts with EPHA2. Interacts with NGF in a divalent cation-dependent manner. Interacts with TSPAN14; the interaction promotes ADAM10 maturation and cell surface expression. Interacts with TSPAN5, TSPAN10, TSPAN14, TSPAN15, TSPAN17 and TSPAN33; these interactions regulate ADAM10 substrate specificity, endocytosis and turnover. Interacts (via extracellular domain) with TSPAN33 (via extracellular domain) and (via cytoplasmic domain) with AFDN; interaction with TSPAN33 allows the docking of ADAM10 to zonula adherens through a PDZ11-dependent interaction between TSPAN33 and PLEKHA7 while interaction with AFDN locks ADAM10 at zonula adherens. Interacts with DLG1; this interaction recruits ADAM10 to the cell membrane during long-term depression in hippocampal neurons. Interacts (via extracellular domain) with BACE1 (via extracellular domain). Interacts with FAM171A1. Zn(2+) is required as a cofactor. Post-translationally, the precursor is cleaved by furin and PCSK7. As to expression, expressed in brain, kidney, lung, spleen, ovary and testis.

Its subcellular location is the cell membrane. It localises to the golgi apparatus membrane. The protein resides in the cytoplasmic vesicle. It is found in the clathrin-coated vesicle. The protein localises to the cell projection. Its subcellular location is the axon. It localises to the dendrite. The protein resides in the cell junction. It is found in the adherens junction. The protein localises to the cytoplasm. The catalysed reaction is Endopeptidase of broad specificity.. Its activity is regulated as follows. Catalytically inactive when the propeptide is intact and associated with the mature enzyme. The disintegrin and cysteine-rich regions modulate access of substrates to exerts an inhibitory effect on the cleavage of ADAM10 substrates. Its function is as follows. Transmembrane metalloprotease which mediates the ectodomain shedding of a myriad of transmembrane proteins, including adhesion proteins, growth factor precursors and cytokines being essential for development and tissue homeostasis. Associates with six members of the tetraspanin superfamily TspanC8 which regulate its exit from the endoplasmic reticulum and its substrate selectivity. Cleaves the membrane-bound precursor of TNF-alpha at '76-Ala-|-Val-77' to its mature soluble form. Responsible for the proteolytical release of soluble JAM3 from endothelial cells surface. Responsible for the proteolytic release of several other cell-surface proteins, including heparin-binding epidermal growth-like factor, ephrin-A2, CD44, CDH2 and for constitutive and regulated alpha-secretase cleavage of amyloid precursor protein (APP). Contributes to the normal cleavage of the cellular prion protein. Involved in the cleavage of the adhesion molecule L1 at the cell surface and in released membrane vesicles, suggesting a vesicle-based protease activity. Also controls the proteolytic processing of Notch and mediates lateral inhibition during neurogenesis. Required for the development of type 1 transitional B cells into marginal zone B cells, probably by cleaving Notch. Responsible for the FasL ectodomain shedding and for the generation of the remnant ADAM10-processed FasL (FasL APL) transmembrane form. Also cleaves the ectodomain of the integral membrane proteins CORIN and ITM2B. Mediates the proteolytic cleavage of LAG3, leading to release the secreted form of LAG3. Mediates the proteolytic cleavage of IL6R and IL11RA, leading to the release of secreted forms of IL6R and IL11RA. Enhances the cleavage of CHL1 by BACE1. Cleaves NRCAM. Cleaves TREM2, resulting in shedding of the TREM2 ectodomain. Involved in the development and maturation of glomerular and coronary vasculature. During development of the cochlear organ of Corti, promotes pillar cell separation by forming a ternary complex with CADH1 and EPHA4 and cleaving CADH1 at adherens junctions. May regulate the EFNA5-EPHA3 signaling. Regulates leukocyte transmigration as a sheddase for the adherens junction protein VE-cadherin/CDH5 in endothelial cells. The sequence is that of Disintegrin and metalloproteinase domain-containing protein 10 (Adam10) from Rattus norvegicus (Rat).